A 494-amino-acid chain; its full sequence is Cobyrinate a,c-diamide synthase (494 aa).

One can recognise a GATase cobBQ-type domain in the interval 270-475 (KIGVALDEAF…AHLHGVAYRE (206 aa)). The active-site Nucleophile is Cys-352.

This sequence belongs to the CobB/CbiA family. Mg(2+) is required as a cofactor.

The enzyme catalyses cob(II)yrinate + 2 L-glutamine + 2 ATP + 2 H2O = cob(II)yrinate a,c diamide + 2 L-glutamate + 2 ADP + 2 phosphate + 2 H(+). It carries out the reaction Ni-sirohydrochlorin + 2 L-glutamine + 2 ATP + 2 H2O = Ni-sirohydrochlorin a,c-diamide + 2 L-glutamate + 2 ADP + 2 phosphate + 2 H(+). The protein operates within cofactor biosynthesis; adenosylcobalamin biosynthesis; cob(II)yrinate a,c-diamide from sirohydrochlorin (anaerobic route): step 10/10. Catalyzes the ATP-dependent amidation of the two carboxylate groups at positions a and c of cobyrinate, using either L-glutamine or ammonia as the nitrogen source (Potential). Involved in the biosynthesis of the unique nickel-containing tetrapyrrole coenzyme F430, the prosthetic group of methyl-coenzyme M reductase (MCR), which plays a key role in methanogenesis and anaerobic methane oxidation. Catalyzes the ATP-dependent amidation of the two carboxylate groups at positions a and c of Ni-sirohydrochlorin, using L-glutamine or ammonia as the nitrogen source. Also able to use sirohydrochlorin as substrate, but only produces a monoamide species in a much slower reaction. Unable to use other metallosirohydrochlorins such as sirohaem and Co-sirohydrochlorin. The sequence is that of Cobyrinate a,c-diamide synthase from Methanosarcina barkeri (strain Fusaro / DSM 804).